Reading from the N-terminus, the 244-residue chain is Protein-L-isoaspartate O-methyltransferase (244 aa).

The interval Met-1–Glu-39 is disordered. Ser-92 is an active-site residue.

Belongs to the methyltransferase superfamily. L-isoaspartyl/D-aspartyl protein methyltransferase family.

It localises to the cytoplasm. It catalyses the reaction [protein]-L-isoaspartate + S-adenosyl-L-methionine = [protein]-L-isoaspartate alpha-methyl ester + S-adenosyl-L-homocysteine. Catalyzes the methyl esterification of L-isoaspartyl residues in peptides and proteins that result from spontaneous decomposition of normal L-aspartyl and L-asparaginyl residues. It plays a role in the repair and/or degradation of damaged proteins. This Synechococcus sp. (strain JA-2-3B'a(2-13)) (Cyanobacteria bacterium Yellowstone B-Prime) protein is Protein-L-isoaspartate O-methyltransferase.